The following is a 668-amino-acid chain: S-adenosyl-L-methionine-dependent tRNA 4-demethylwyosine synthase TYW1B (668 aa).

Residues 37–191 (CVQIVIEMQG…NFRAWKTKFI (155 aa)) enclose the Flavodoxin-like domain. FMN is bound by residues 43 to 47 (EMQGF) and 130 to 162 (VFGL…HRVM). The disordered stretch occupies residues 202 to 269 (RKKSCGGHCK…QSLNSIVDVE (68 aa)). Basic and acidic residues-rich tracts occupy residues 213 to 223 (GKCESHQHGSE) and 233 to 243 (DELHHRDTKEE). A compositionally biased stretch (acidic residues) spans 244-255 (EPFESSSEEEFG). The region spanning 336–580 (LWNESHRCME…VDLIPEYEIA (245 aa)) is the Radical SAM core domain. Residues Cys352, Cys356, and Cys359 each contribute to the [4Fe-4S] cluster site.

The protein belongs to the TYW1 family. It depends on [4Fe-4S] cluster as a cofactor.

It catalyses the reaction N(1)-methylguanosine(37) in tRNA(Phe) + pyruvate + S-adenosyl-L-methionine = 4-demethylwyosine(37) in tRNA(Phe) + 5'-deoxyadenosine + L-methionine + CO2 + H2O. The protein operates within tRNA modification; wybutosine-tRNA(Phe) biosynthesis. Its function is as follows. Probable component of the wybutosine biosynthesis pathway. Wybutosine is a hyper modified guanosine with a tricyclic base found at the 3'-position adjacent to the anticodon of eukaryotic phenylalanine tRNA. Catalyzes the condensation of N-methylguanine with 2 carbon atoms from pyruvate to form the tricyclic 4-demethylwyosine, an intermediate in wybutosine biosynthesis. This Homo sapiens (Human) protein is S-adenosyl-L-methionine-dependent tRNA 4-demethylwyosine synthase TYW1B (TYW1B).